Here is a 246-residue protein sequence, read N- to C-terminus: Adenosylcobinamide-GDP ribazoletransferase (246 aa).

6 helical membrane passes run 34-54, 59-79, 113-133, 136-156, 181-201, and 203-223; these read IVTF…VALL, CGVP…TGGF, GGLA…ELLL, IHPI…AALL, TLVT…LQGL, and AALI…RTLG.

Belongs to the CobS family. Mg(2+) serves as cofactor.

It is found in the cell inner membrane. The enzyme catalyses alpha-ribazole + adenosylcob(III)inamide-GDP = adenosylcob(III)alamin + GMP + H(+). It catalyses the reaction alpha-ribazole 5'-phosphate + adenosylcob(III)inamide-GDP = adenosylcob(III)alamin 5'-phosphate + GMP + H(+). The protein operates within cofactor biosynthesis; adenosylcobalamin biosynthesis; adenosylcobalamin from cob(II)yrinate a,c-diamide: step 7/7. In terms of biological role, joins adenosylcobinamide-GDP and alpha-ribazole to generate adenosylcobalamin (Ado-cobalamin). Also synthesizes adenosylcobalamin 5'-phosphate from adenosylcobinamide-GDP and alpha-ribazole 5'-phosphate. This chain is Adenosylcobinamide-GDP ribazoletransferase, found in Klebsiella pneumoniae subsp. pneumoniae (strain ATCC 700721 / MGH 78578).